The chain runs to 2188 residues: Phenolphthiocerol/phthiocerol polyketide synthase subunit C (2188 aa).

Residues 34 to 462 (SEPIAVIGMG…GTNAHVVIEQ (429 aa)) form the Ketosynthase family 3 (KS3) domain. Active-site for beta-ketoacyl synthase activity residues include Cys-210, His-345, and His-384. Positions 572 to 890 (VFVYSGRGSQ…NLNTTHTTHP (319 aa)) are acyltransferase. The active-site For malonyltransferase activity is the Ser-660. Residues 928-1050 (HPLLGVGVTD…ATVARAEPLA (123 aa)) are N-terminal hotdog fold. The segment at 928–1093 (HPLLGVGVTD…QQHGPAFQGI (166 aa)) is dehydratase. A PKS/mFAS DH domain is found at 928–1223 (HPLLGVGVTD…MAVLGSGSGA (296 aa)). The Proton acceptor; for dehydratase activity role is filled by His-959. The tract at residues 1067–1223 (EDQLDPDDLY…MAVLGSGSGA (157 aa)) is C-terminal hotdog fold. The active-site Proton donor; for dehydratase activity is Asp-1129. The segment at 1467-1778 (GRLDALNVHE…SGKHTGKIVI (312 aa)) is enoylreductase. Residues 1802 to 1981 (GGYLIVGGMG…GINWGPWADV (180 aa)) are beta-ketoacyl reductase. 1803–1848 (GYLIVGGMGGLGFVVARWLAEQGAGLIVLNGRSAPSDEVAAAIAEL) serves as a coordination point for NADP(+). In terms of domain architecture, Carrier spans 2069–2145 (ERPGHLASAI…DLATALCERM (77 aa)). Ser-2105 carries the post-translational modification O-(pantetheine 4'-phosphoryl)serine.

Homodimer. NADP(+) is required as a cofactor. Requires pantetheine 4'-phosphate as cofactor.

It catalyses the reaction icosanoyl-[(phenol)carboxyphthiodiolenone synthase] + 2 (S)-methylmalonyl-CoA + 3 malonyl-CoA + 5 NADPH + 10 H(+) = C32-carboxyphthiodiolenone-[(phenol)carboxyphthiodiolenone synthase] + 5 CO2 + 5 NADP(+) + 5 CoA + 2 H2O. It carries out the reaction docosanoyl-[(phenol)carboxyphthiodiolenone synthase] + 2 (S)-methylmalonyl-CoA + 3 malonyl-CoA + 5 NADPH + 10 H(+) = C34-carboxyphthiodiolenone-[(phenol)carboxyphthiodiolenone synthase] + 5 CO2 + 5 NADP(+) + 5 CoA + 2 H2O. The enzyme catalyses 17-(4-hydroxyphenyl)heptadecanoyl-[(phenol)carboxyphthiodiolenone synthase] + 2 (S)-methylmalonyl-CoA + 3 malonyl-CoA + 5 NADPH + 10 H(+) = C35-(phenol)carboxyphthiodiolenone-[(phenol)carboxyphthiodiolenone synthase] + 5 CO2 + 5 NADP(+) + 5 CoA + 2 H2O. The catalysed reaction is 19-(4-hydroxyphenyl)nonadecanoyl-[(phenol)carboxyphthiodiolenone synthase] + 2 (S)-methylmalonyl-CoA + 3 malonyl-CoA + 5 NADPH + 10 H(+) = C37-(phenol)carboxyphthiodiolenone-[(phenol)carboxyphthiodiolenone synthase] + 5 CO2 + 5 NADP(+) + 5 CoA + 2 H2O. The protein operates within lipid metabolism; fatty acid biosynthesis. Its function is as follows. Part of the PpsABCDE complex involved in the biosynthesis of the lipid core common to phthiocerols and phenolphthiocerols by successive additions of malonyl-CoA or methylmalonyl-CoA extender units. PpsA can accept as substrate the activated forms of either icosanoyl (C20), docosanoyl (C22) or lignoceroyl (C24) groups from FadD26, or a (4-hydroxyphenyl)-C17 or (4-hydroxyphenyl)-C19 fatty acyl from FadD29. PpsA initiates the biosynthesis and extends its substrate using a malonyl-CoA extender unit. The PpsB and PpsC proteins add the second and third malonyl-CoA extender units. PpsD adds an (R)-methylmalonyl unit and PpsE adds a second (R)-methylmalonyl unit. The incorporation of the methylmalonyl units results in formation of two branched methyl groups in the elongated product. In Mycobacterium bovis (strain ATCC BAA-935 / AF2122/97), this protein is Phenolphthiocerol/phthiocerol polyketide synthase subunit C (ppsC).